Reading from the N-terminus, the 314-residue chain is MPASAPQNSTTFDSARFLDDYKKTADALGAPYNESIVARTLNSFGNCFNEGTVIWRSTSRPNDKLNYRFYLRDRVDTVALAIKAGYIEESHPMARLVTCWSNLFDGETVQWCDLDPEEGVAKTWIFMKTQRSIDNILDAAEVSDCVRAHRATFHSLGLKLVHFAAVDYHGGTLNIYFTVPGPISEAQAAAYTNLSGCKPPTPDEFADLRKYLPTQRFVFAATIDYTTGKIKRVAFYALNVPGSELPETMNDRLRKFFADAPSYDKQQTKNIAWSYGNGDSKYMKGLGEECEESRAGTFGPDVGGCESFLLLLRL.

The protein belongs to the aromatic prenyltransferase family.

In terms of biological role, prenyltransferase that attaches isoprenoid moieties to carbon atoms of aromatic substrates in an enzyme-catalyzed Friedel-Crafts reaction. The protein is Aromatic prenyltransferase of Arthroderma otae (strain ATCC MYA-4605 / CBS 113480) (Microsporum canis).